We begin with the raw amino-acid sequence, 872 residues long: Alanine--tRNA ligase (872 aa).

Residues histidine 566, histidine 570, cysteine 668, and histidine 672 each contribute to the Zn(2+) site.

The protein belongs to the class-II aminoacyl-tRNA synthetase family. Zn(2+) serves as cofactor.

The protein resides in the cytoplasm. The catalysed reaction is tRNA(Ala) + L-alanine + ATP = L-alanyl-tRNA(Ala) + AMP + diphosphate. Catalyzes the attachment of alanine to tRNA(Ala) in a two-step reaction: alanine is first activated by ATP to form Ala-AMP and then transferred to the acceptor end of tRNA(Ala). Also edits incorrectly charged Ser-tRNA(Ala) and Gly-tRNA(Ala) via its editing domain. The chain is Alanine--tRNA ligase from Lactococcus lactis subsp. cremoris (strain MG1363).